The chain runs to 554 residues: Arginine--tRNA ligase (554 aa).

The short motif at 129-139 (ANPTGPLHIGH) is the 'HIGH' region element.

This sequence belongs to the class-I aminoacyl-tRNA synthetase family. Monomer.

It is found in the cytoplasm. The enzyme catalyses tRNA(Arg) + L-arginine + ATP = L-arginyl-tRNA(Arg) + AMP + diphosphate. The sequence is that of Arginine--tRNA ligase from Geobacter sp. (strain M21).